The sequence spans 186 residues: Probable GTP-binding protein EngB (186 aa).

One can recognise an EngB-type G domain in the interval 18–186 (SKKEVCLIGR…LMLKIIDVIS (169 aa)). Residues 26–33 (GRSNVGKS), 52–56 (GRTVT), 69–72 (DLPG), 135–138 (NKID), and 166–168 (ISA) contribute to the GTP site. The Mg(2+) site is built by Ser33 and Thr54.

Belongs to the TRAFAC class TrmE-Era-EngA-EngB-Septin-like GTPase superfamily. EngB GTPase family. It depends on Mg(2+) as a cofactor.

Its function is as follows. Necessary for normal cell division and for the maintenance of normal septation. The protein is Probable GTP-binding protein EngB of Mycoplasmoides gallisepticum (strain R(low / passage 15 / clone 2)) (Mycoplasma gallisepticum).